The following is a 276-amino-acid chain: Secretagogin (276 aa).

EF-hand domains follow at residues 12 to 47 (LDAAGFWQVWQRFDVEEKGYIEEKELDAFFYHMLTK), 71 to 93 (DVSKDGCIQMKELAGMFLSEDEN), 105 to 140 (DSSVEFMRIWRKYDADSSGFISAAELCNFLRDLFLH), 149 to 184 (KLEEYTGTMMKIFDKNKDGRLDLNDLARILALQENF), 197 to 232 (ERKRDFEKIFAHYDVSKTGALEGPEVDGFVKDMMEL), and 240 to 276 (VDLDKFREILLRHCDVNKDGKIQKSELALCLGLKINP). Positions 71, 73, 75, 77, 82, 118, 120, 122, 129, 162, 164, 166, 168, 173, 210, 212, 214, 221, 254, 256, 258, 260, and 265 each coordinate Ca(2+).

It is found in the cytoplasm. Its subcellular location is the secreted. It localises to the cytoplasmic vesicle. The protein resides in the secretory vesicle membrane. The chain is Secretagogin (SCGN) from Bos taurus (Bovine).